Here is a 352-residue protein sequence, read N- to C-terminus: Uroporphyrinogen decarboxylase (352 aa).

Substrate contacts are provided by residues 26–30, Asp76, Tyr153, Ser208, and His323; that span reads RQAGR.

This sequence belongs to the uroporphyrinogen decarboxylase family. As to quaternary structure, homodimer.

The protein localises to the cytoplasm. The enzyme catalyses uroporphyrinogen III + 4 H(+) = coproporphyrinogen III + 4 CO2. It participates in porphyrin-containing compound metabolism; protoporphyrin-IX biosynthesis; coproporphyrinogen-III from 5-aminolevulinate: step 4/4. Catalyzes the decarboxylation of four acetate groups of uroporphyrinogen-III to yield coproporphyrinogen-III. This is Uroporphyrinogen decarboxylase from Synechococcus sp. (strain CC9902).